The primary structure comprises 478 residues: Divinyl ether synthase CYP74D2 (478 aa).

Cys-431 serves as a coordination point for heme.

The protein belongs to the cytochrome P450 family. 9-divinyl ether synthase subfamily. In terms of tissue distribution, expressed in roots.

It carries out the reaction (9S)-hydroperoxy-(10E,12Z)-octadecadienoate = colneleate + H2O. The enzyme catalyses (9S)-hydroperoxy-(10E,12Z,15Z)-octadecatrienoate = colnelenate + H2O. Functionally, involved in the biosynthesis of the anti-fungal and antibacterial toxins colneleate and colnelenate. Can use (9S)-hydroperoxy-(10E,12Z)-octadecadienoate (9-HPOD) and (9S)-hydroperoxy-(10E,12Z,15Z)-octadecatrienoate (9-HPOT) as substrates but has no activity with the corresponding 13-hydroperoxides (13-HPOD and 13-HPOT). This is Divinyl ether synthase CYP74D2 from Solanum tuberosum (Potato).